The primary structure comprises 172 residues: Shikimate kinase (172 aa).

12–17 is an ATP binding site; the sequence is GSGKTS. T16 serves as a coordination point for Mg(2+). D34, R58, and G81 together coordinate substrate. R122 contributes to the ATP binding site. Substrate is bound at residue R139.

Belongs to the shikimate kinase family. As to quaternary structure, monomer. Mg(2+) serves as cofactor.

It is found in the cytoplasm. It carries out the reaction shikimate + ATP = 3-phosphoshikimate + ADP + H(+). It participates in metabolic intermediate biosynthesis; chorismate biosynthesis; chorismate from D-erythrose 4-phosphate and phosphoenolpyruvate: step 5/7. Catalyzes the specific phosphorylation of the 3-hydroxyl group of shikimic acid using ATP as a cosubstrate. The sequence is that of Shikimate kinase from Dictyoglomus turgidum (strain DSM 6724 / Z-1310).